The sequence spans 149 residues: Large ribosomal subunit protein bL9 (149 aa).

It belongs to the bacterial ribosomal protein bL9 family.

In terms of biological role, binds to the 23S rRNA. This Aliivibrio salmonicida (strain LFI1238) (Vibrio salmonicida (strain LFI1238)) protein is Large ribosomal subunit protein bL9.